Reading from the N-terminus, the 103-residue chain is Small ribosomal subunit protein eS24 (103 aa).

It belongs to the eukaryotic ribosomal protein eS24 family.

This chain is Small ribosomal subunit protein eS24, found in Methanococcus maripaludis (strain C6 / ATCC BAA-1332).